The chain runs to 856 residues: MAEGFAANRQWIGPEEAEELLDFDIATQMSEEGPLNPGVNPFRVPGITEKEKQNYCNILQPKLQDLRNEIQEVKLEEGNAGKFRRARFLRYSDERVLSLVHAFIGYCIYLGNRNKLGSLRHDIDIEAPQEECYNNREKGTTDNIKYGRRCCLGTVTLYLILFTGVIVYSQTAGAQVVWRLPPLVVPVEESEIIFWDCWAPEEPACQDFLGAMIHLKAKTNISIREGPTLGNWAREIWATLFKKATRQCRRGRIWKRWNETITGPSGCANNTCYNVSVIVPDYQCYLDRVDTWLQGKINISLCLTGGKMLYNKVTKQLSYCTDPLQIPLINYTFGPNQTCMWNTSQIQDPEIPKCGWWNQMAYYNSCKWEEAKVKFHCQRTQSQPGSWFRAISSWKQRNRWEWRPDFKSKKVKISLPCNSTKNLTFAMRSSGDYGEVTGAWIEFGCHRNKSNLHTEARFRIRCRWNVGSDTSLIDTCGNTPNVSGANPVDCTMYSNKMYNCSLQNGFTMKVDDLIVHFNMTKAVEMYNIAGNWSCTSDLPSSWGYMNCNCTNSSSSYSGTKMACPSNRGILRNWYNPVAGLRQSLEQYQVVKQPDYLLVPEEVMEYKPRRKRAAIHVMLALATVLSIAGAGTGATAIGMVTQYHQVLATHQEAIEKVTGALKINNLRLVTLEHQVLVIGLKVEAMEKFLYTAFAMQELGCNQNQFFCKIPLELWTRYNMTINQTIWNHGNITLGEWYNQTKDLQQKFYEIIMDIEQNNVQGKTGIQQLQKWEDWVRWIGNIPQYLKGLLGGILGIGLGVLLLILCLPTLVDCIRNCIHKILGYTVIAMPEVEGEEIQPQMELRRNGRQCGMSEKEEE.

Residues 1 to 785 are Extracellular-facing; the sequence is MAEGFAANRQ…WIGNIPQYLK (785 aa). 17 N-linked (GlcNAc...) asparagine; by host glycosylation sites follow: asparagine 220, asparagine 258, asparagine 269, asparagine 274, asparagine 298, asparagine 330, asparagine 336, asparagine 342, asparagine 418, asparagine 422, asparagine 448, asparagine 481, asparagine 499, asparagine 518, asparagine 531, asparagine 548, and asparagine 551. Residues 616–636 are fusion peptide; the sequence is VMLALATVLSIAGAGTGATAI. A coiled-coil region spans residues 643 to 693; that stretch reads HQVLATHQEAIEKVTGALKINNLRLVTLEHQVLVIGLKVEAMEKFLYTAFA. An immunosuppression region spans residues 662-680; the sequence is INNLRLVTLEHQVLVIGLK. N-linked (GlcNAc...) asparagine; by host glycans are attached at residues asparagine 717, asparagine 721, asparagine 729, and asparagine 737. Positions 736–772 form a coiled coil; sequence YNQTKDLQQKFYEIIMDIEQNNVQGKTGIQQLQKWED. A helical membrane pass occupies residues 786–806; sequence GLLGGILGIGLGVLLLILCLP. The Cytoplasmic portion of the chain corresponds to 807 to 856; it reads TLVDCIRNCIHKILGYTVIAMPEVEGEEIQPQMELRRNGRQCGMSEKEEE.

As to quaternary structure, the mature envelope protein (Env) consists of a trimer of SU-TM heterodimers attached by noncovalent interactions or by a labile interchain disulfide bond. In terms of processing, specific enzymatic cleavages in vivo yield mature proteins. Envelope glycoproteins are synthesized as an inactive precursor that is N-glycosylated and processed likely by host cell furin or by a furin-like protease in the Golgi to yield the mature SU and TM proteins. The cleavage site between SU and TM requires the minimal sequence [KR]-X-[KR]-R.

The protein resides in the virion membrane. Its subcellular location is the host cell membrane. Its function is as follows. The surface protein (SU) attaches the virus to the host cell by binding to its receptor. This interaction triggers the refolding of the transmembrane protein (TM) and is thought to activate its fusogenic potential by unmasking its fusion peptide. Fusion occurs at the host cell plasma membrane. Functionally, the transmembrane protein (TM) acts as a class I viral fusion protein. Under the current model, the protein has at least 3 conformational states: pre-fusion native state, pre-hairpin intermediate state, and post-fusion hairpin state. During viral and target cell membrane fusion, the coiled coil regions (heptad repeats) assume a trimer-of-hairpins structure, positioning the fusion peptide in close proximity to the C-terminal region of the ectodomain. The formation of this structure appears to drive apposition and subsequent fusion of viral and target cell membranes. Membranes fusion leads to delivery of the nucleocapsid into the cytoplasm. In Felidae (cat family), this protein is Envelope glycoprotein gp150 (env).